The sequence spans 143 residues: Ribulose bisphosphate carboxylase large chain (143 aa).

Residues 1–2 (MS) constitute a propeptide that is removed on maturation. Residue Pro3 is modified to N-acetylproline. Position 14 is an N6,N6,N6-trimethyllysine (Lys14). Xaa123 lines the substrate pocket.

The protein belongs to the RuBisCO large chain family. Type I subfamily. Heterohexadecamer of 8 large chains and 8 small chains.

The protein resides in the plastid. The protein localises to the chloroplast. The catalysed reaction is 2 (2R)-3-phosphoglycerate + 2 H(+) = D-ribulose 1,5-bisphosphate + CO2 + H2O. The enzyme catalyses D-ribulose 1,5-bisphosphate + O2 = 2-phosphoglycolate + (2R)-3-phosphoglycerate + 2 H(+). Its function is as follows. RuBisCO catalyzes two reactions: the carboxylation of D-ribulose 1,5-bisphosphate, the primary event in carbon dioxide fixation, as well as the oxidative fragmentation of the pentose substrate in the photorespiration process. Both reactions occur simultaneously and in competition at the same active site. This Nemopanthus mucronatus (Catberry) protein is Ribulose bisphosphate carboxylase large chain (rbcL).